The sequence spans 250 residues: Probable transcriptional regulatory protein DIP1378 (250 aa).

The interval Met1–Gly22 is disordered.

The protein belongs to the TACO1 family.

The protein resides in the cytoplasm. This Corynebacterium diphtheriae (strain ATCC 700971 / NCTC 13129 / Biotype gravis) protein is Probable transcriptional regulatory protein DIP1378.